The chain runs to 492 residues: Heat shock factor protein 4 (492 aa).

The DNA-binding element occupies 17 to 121; sequence VPAFLGKLWA…QLLERVRRKV (105 aa). Residues 129–203 form a hydrophobic repeat HR-A/B region; it reads GRWRPEDLGR…GPLQTGSSGA (75 aa). The segment at 245–323 is interactions with DUSP26, MAPK1 and MAPK2; sequence LPETTLGLSS…ECDFCVTAPP (79 aa). The tract at residues 250 to 286 is disordered; the sequence is LGLSSSHRTRGPIISDIHEDSPSPDGTRLSPSSGGRR. Lysine 294 participates in a covalent cross-link: Glycyl lysine isopeptide (Lys-Gly) (interchain with G-Cter in SUMO). A Phosphoserine modification is found at serine 299. Positions 337–378 are disordered; it reads KGNFSPEGPRNAQQPEPRGPREVPDRGTLGLDRGARSPENLL. The tract at residues 365–390 is hydrophobic repeat HR-C; it reads LGLDRGARSPENLLPPMLLRAPPESV.

It belongs to the HSF family. Homotrimer. Exhibits constitutive DNA binding and forms trimers even in the absence of stress. Interacts with ALKBH4, DUSP26, MAPK1, MAPK2, MAPK8 and MAP kinase p38. In terms of processing, phosphorylated mainly on serine residues. Phosphorylation on Ser-299 promotes sumoylation on Lys-294. Post-translationally, constitutively sumoylated. Sumoylation represses the transcriptional activity and is promoted by phosphorylation on Ser-299.

The protein localises to the nucleus. Heat-shock transcription factor that specifically binds heat shock promoter elements (HSE). Required for denucleation and organelle rupture and degradation that occur during eye lens terminal differentiation, when fiber cells that compose the lens degrade all membrane-bound organelles in order to provide lens with transparency to allow the passage of light. In this process, may regulate denucleation of lens fiber cells in part by activating DNASE2B transcription. May be involved in DNA repair through the transcriptional regulation of RAD51. May up-regulate p53/TP53 protein in eye lens fiber cells, possibly through protein stabilization. In the eye lens, controls the expression of alpha-crystallin B chain/CRYAB and consequently may be involved in the regulation of lysosomal acidification. This is Heat shock factor protein 4 (HSF4) from Canis lupus familiaris (Dog).